Here is a 261-residue protein sequence, read N- to C-terminus: Proteasome subunit alpha type-4 (261 aa).

Ser13 and Ser75 each carry phosphoserine. At Lys127 the chain carries N6-acetyllysine. Ser173 carries the phosphoserine modification. Lys176 is modified (N6-acetyllysine). The disordered stretch occupies residues 240–261; it reads HEEEEAKAEREKKEKEQKEKDK.

The protein belongs to the peptidase T1A family. In terms of assembly, the 26S proteasome consists of a 20S proteasome core and two 19S regulatory subunits. The 20S proteasome core is a barrel-shaped complex made of 28 subunits that are arranged in four stacked rings. The two outer rings are each formed by seven alpha subunits, and the two inner rings are formed by seven beta subunits. The proteolytic activity is exerted by three beta-subunits PSMB5, PSMB6 and PSMB7.

It localises to the cytoplasm. The protein resides in the nucleus. Its function is as follows. Component of the 20S core proteasome complex involved in the proteolytic degradation of most intracellular proteins. This complex plays numerous essential roles within the cell by associating with different regulatory particles. Associated with two 19S regulatory particles, forms the 26S proteasome and thus participates in the ATP-dependent degradation of ubiquitinated proteins. The 26S proteasome plays a key role in the maintenance of protein homeostasis by removing misfolded or damaged proteins that could impair cellular functions, and by removing proteins whose functions are no longer required. Associated with the PA200 or PA28, the 20S proteasome mediates ubiquitin-independent protein degradation. This type of proteolysis is required in several pathways including spermatogenesis (20S-PA200 complex) or generation of a subset of MHC class I-presented antigenic peptides (20S-PA28 complex). The polypeptide is Proteasome subunit alpha type-4 (PSMA4) (Bos taurus (Bovine)).